We begin with the raw amino-acid sequence, 258 residues long: Sec-independent protein translocase protein TatC (258 aa).

Residues 2-23 (SVEDTQPLITHLIELRKRLLNC) lie on the Cytoplasmic side of the membrane. A helical transmembrane segment spans residues 24–44 (IISVIVIFLCLVYFANDIYHL). Topologically, residues 45 to 75 (VSAPLIKQLPQGSTMIATDVASPFFTPIKLT) are periplasmic. The helical transmembrane segment at 76 to 96 (FMVSLILSAPVILYQVWAFIA) threads the bilayer. Residues 97–115 (PALYKHERRLVVPLLVSSS) lie on the Cytoplasmic side of the membrane. The helical transmembrane segment at 116-136 (LLFYIGMAFAYFVVFPLAFGF) threads the bilayer. The Periplasmic portion of the chain corresponds to 137–156 (LANTAPEGVQVSTDIASYLS). A helical membrane pass occupies residues 157-177 (FVMALFMAFGVSFEVPVAIVL). Residues 178–192 (LCWMGITSPEDLRKK) lie on the Cytoplasmic side of the membrane. The helical transmembrane segment at 193–210 (RPYVLVGAFVVGMLLTPP) threads the bilayer. Position 211 (aspartate 211) is a topological domain, periplasmic. Residues 212-232 (VFSQTLLAIPMYCLFEIGVFF) form a helical membrane-spanning segment. Residues 233–258 (SRFYVGKGRNREEENDAEAESEKTEE) are Cytoplasmic-facing.

It belongs to the TatC family. In terms of assembly, the Tat system comprises two distinct complexes: a TatABC complex, containing multiple copies of TatA, TatB and TatC subunits, and a separate TatA complex, containing only TatA subunits. Substrates initially bind to the TatABC complex, which probably triggers association of the separate TatA complex to form the active translocon.

The protein localises to the cell inner membrane. Part of the twin-arginine translocation (Tat) system that transports large folded proteins containing a characteristic twin-arginine motif in their signal peptide across membranes. Together with TatB, TatC is part of a receptor directly interacting with Tat signal peptides. The polypeptide is Sec-independent protein translocase protein TatC (Escherichia coli O6:H1 (strain CFT073 / ATCC 700928 / UPEC)).